The chain runs to 377 residues: N-acetyldiaminopimelate deacetylase (377 aa).

Residue Asp70 is part of the active site. Glu129 functions as the Proton acceptor in the catalytic mechanism.

Belongs to the peptidase M20A family. N-acetyldiaminopimelate deacetylase subfamily.

It catalyses the reaction N-acetyl-(2S,6S)-2,6-diaminopimelate + H2O = (2S,6S)-2,6-diaminopimelate + acetate. The protein operates within amino-acid biosynthesis; L-lysine biosynthesis via DAP pathway; LL-2,6-diaminopimelate from (S)-tetrahydrodipicolinate (acetylase route): step 3/3. Functionally, catalyzes the conversion of N-acetyl-diaminopimelate to diaminopimelate and acetate. The polypeptide is N-acetyldiaminopimelate deacetylase (Geobacillus thermodenitrificans (strain NG80-2)).